The primary structure comprises 324 residues: COP9 signalosome complex subunit 6 (324 aa).

The region spanning 38–171 (VALHPLVILN…VSVFESVIDI (134 aa)) is the MPN domain.

Belongs to the peptidase M67A family. CSN6 subfamily. In terms of assembly, component of the CSN complex, composed of COPS1/GPS1, COPS2, COPS3, COPS4, COPS5, COPS6, COPS7 (COPS7A or COPS7B), COPS8 and COPS9. In the complex, it probably interacts directly with COPS2, COPS4, COPS5, COPS7 (COPS7A or COPS7B) and COPS9. Interacts with the translation initiation factor EIF3S6. Interacts weakly with RBX1. Directly interacts with COP1 and 14-3-3 protein sigma/SFN. Interacts with ERCC6.

The protein localises to the cytoplasm. The protein resides in the nucleus. Its function is as follows. Component of the COP9 signalosome complex (CSN), a complex involved in various cellular and developmental processes. The CSN complex is an essential regulator of the ubiquitin (Ubl) conjugation pathway by mediating the deneddylation of the cullin subunits of SCF-type E3 ligase complexes, leading to decrease the Ubl ligase activity of SCF-type complexes such as SCF, CSA or DDB2. The complex is also involved in phosphorylation of p53/TP53, c-jun/JUN, IkappaBalpha/NFKBIA, ITPK1 and IRF8, possibly via its association with CK2 and PKD kinases. CSN-dependent phosphorylation of TP53 and JUN promotes and protects degradation by the Ubl system, respectively. Has some glucocorticoid receptor-responsive activity. Stabilizes COP1 through reducing COP1 auto-ubiquitination and decelerating COP1 turnover rate, hence regulates the ubiquitination of COP1 targets, including SFN. The polypeptide is COP9 signalosome complex subunit 6 (Cops6) (Mus musculus (Mouse)).